Here is a 549-residue protein sequence, read N- to C-terminus: Arginine--tRNA ligase (549 aa).

The 'HIGH' region motif lies at 132–142 (ANPTGPLHLAH).

Belongs to the class-I aminoacyl-tRNA synthetase family. As to quaternary structure, monomer.

The protein localises to the cytoplasm. It carries out the reaction tRNA(Arg) + L-arginine + ATP = L-arginyl-tRNA(Arg) + AMP + diphosphate. The chain is Arginine--tRNA ligase from Renibacterium salmoninarum (strain ATCC 33209 / DSM 20767 / JCM 11484 / NBRC 15589 / NCIMB 2235).